The sequence spans 119 residues: Hisactophilin-3 (119 aa).

Residue G2 is the site of N-myristoyl glycine attachment. The tract at residues 8 to 110 (SHHGHFLSAE…SIYTTHHHHH (103 aa)) is contains several HHXH repeats. Repeat copies occupy residues 34-47 (FHVE…VAIR) and 75-87 (FHLE…VSIK). Residues 34 to 87 (FHVENHGHHKVAIRTHANKYVSINDNNDVYISHHFHGEHSLFHLEHHGGKVSIK) form a 2 X 13 AA approximate repeats region.

The protein belongs to the hisactophilin family. Phosphorylated.

It localises to the cytoplasm. The protein localises to the cell membrane. In terms of biological role, may act as an intracellular pH sensor that links chemotactic signals to responses in the microfilament system of the cells by nucleating actin polymerization or stabilizing the filaments. The chain is Hisactophilin-3 (hatC) from Dictyostelium discoideum (Social amoeba).